A 157-amino-acid polypeptide reads, in one-letter code: Crossover junction endodeoxyribonuclease RuvC (157 aa).

Catalysis depends on residues Asp7, Glu67, and Asp140. Mg(2+) contacts are provided by Asp7, Glu67, and Asp140.

It belongs to the RuvC family. As to quaternary structure, homodimer which binds Holliday junction (HJ) DNA. The HJ becomes 2-fold symmetrical on binding to RuvC with unstacked arms; it has a different conformation from HJ DNA in complex with RuvA. In the full resolvosome a probable DNA-RuvA(4)-RuvB(12)-RuvC(2) complex forms which resolves the HJ. It depends on Mg(2+) as a cofactor.

It is found in the cytoplasm. It catalyses the reaction Endonucleolytic cleavage at a junction such as a reciprocal single-stranded crossover between two homologous DNA duplexes (Holliday junction).. Its function is as follows. The RuvA-RuvB-RuvC complex processes Holliday junction (HJ) DNA during genetic recombination and DNA repair. Endonuclease that resolves HJ intermediates. Cleaves cruciform DNA by making single-stranded nicks across the HJ at symmetrical positions within the homologous arms, yielding a 5'-phosphate and a 3'-hydroxyl group; requires a central core of homology in the junction. The consensus cleavage sequence is 5'-(A/T)TT(C/G)-3'. Cleavage occurs on the 3'-side of the TT dinucleotide at the point of strand exchange. HJ branch migration catalyzed by RuvA-RuvB allows RuvC to scan DNA until it finds its consensus sequence, where it cleaves and resolves the cruciform DNA. In Rickettsia prowazekii (strain Madrid E), this protein is Crossover junction endodeoxyribonuclease RuvC.